The sequence spans 604 residues: ATP-dependent RNA helicase DED1 (604 aa).

Over residues 1–19 (MAELSEQVQNLSINDNNEN) the composition is skewed to polar residues. The interval 1–55 (MAELSEQVQNLSINDNNENGYVPPHLRGKPRSARNNSSNYNNNNGGYNGGRGGGS) is disordered. Ala-2 is subject to N-acetylalanine. The span at 34–45 (RNNSSNYNNNNG) shows a compositional bias: low complexity. Residues 46–55 (GYNGGRGGGS) show a composition bias toward gly residues. Residue Arg-51 is modified to Omega-N-methylarginine. Position 62 is a dimethylated arginine; alternate (Arg-62). Position 62 is an omega-N-methylarginine; alternate (Arg-62). Residues 67-76 (NGGFFGGNNG) show a composition bias toward gly residues. A disordered region spans residues 67–94 (NGGFFGGNNGGSRSNGRSGGRWIDGKHV). The Q motif signature appears at 142-170 (TEFTSPPLDGLLLENIKLARFTKPTPVQK). Residue Lys-158 forms a Glycyl lysine isopeptide (Lys-Gly) (interchain with G-Cter in ubiquitin) linkage. Residues 173-362 (VPIVANGRDL…RDFLSDYIFL (190 aa)) enclose the Helicase ATP-binding domain. An ATP-binding site is contributed by 186 to 193 (AQTGSGKT). A phosphoserine mark is found at Ser-215, Ser-218, and Ser-263. The DEAD box motif lies at 306–309 (DEAD). One can recognise a Helicase C-terminal domain in the interval 373–533 (NITQKVLYVE…EVPSFLKDAM (161 aa)). The interval 533–604 (MMSAPGSRSN…SGGSNNSSWW (72 aa)) is disordered. Ser-535, Ser-539, and Ser-543 each carry phosphoserine. Arg-545 carries the post-translational modification Dimethylated arginine; alternate. Arg-545 carries the post-translational modification Omega-N-methylarginine; alternate. Residues Ser-572 and Ser-576 each carry the phosphoserine modification. At Arg-578 the chain carries Omega-N-methylarginine. Residues 584–604 (GSDSKSSGWGNSGGSNNSSWW) show a composition bias toward low complexity. Ser-598 is modified (phosphoserine).

This sequence belongs to the DEAD box helicase family. DDX3/DED1 subfamily. Interacts with the L-A virus GAG protein and the whole L-A virus particles.

Its subcellular location is the cytoplasm. The catalysed reaction is ATP + H2O = ADP + phosphate + H(+). Its function is as follows. ATP-binding RNA helicase involved in translation initiation. Remodels RNA in response to ADP and ATP concentrations by facilitating disruption, but also formation of RNA duplexes. Has weak ATP-dependent affinity for dsRNA, but strong ATP-dependent affinity for ssRNA. Acts as a virus host factor involved in the replication of the MBV and the L-A viruses by promoting the negative-strand RNA synthesis. May be involved in recognition of the preinitiation complex and DNA binding of the RNA polymerase III and play a role in mRNA splicing. The chain is ATP-dependent RNA helicase DED1 from Saccharomyces cerevisiae (strain ATCC 204508 / S288c) (Baker's yeast).